The primary structure comprises 357 residues: Alanine racemase (357 aa).

The active-site Proton acceptor; specific for D-alanine is the Lys-35. Lys-35 bears the N6-(pyridoxal phosphate)lysine mark. Arg-130 lines the substrate pocket. The Proton acceptor; specific for L-alanine role is filled by Tyr-255. Met-303 provides a ligand contact to substrate.

Belongs to the alanine racemase family. Pyridoxal 5'-phosphate is required as a cofactor.

It catalyses the reaction L-alanine = D-alanine. The protein operates within amino-acid biosynthesis; D-alanine biosynthesis; D-alanine from L-alanine: step 1/1. Functionally, catalyzes the interconversion of L-alanine and D-alanine. May also act on other amino acids. The polypeptide is Alanine racemase (alr) (Nitrosospira multiformis (strain ATCC 25196 / NCIMB 11849 / C 71)).